Reading from the N-terminus, the 299-residue chain is Taste receptor type 2 member 5 (299 aa).

Methionine 1 is a topological domain (extracellular). Residues 2–22 (LSAGLGLLMLVAVVEFLIGLI) form a helical membrane-spanning segment. The Cytoplasmic segment spans residues 23–45 (GNGVLVVWSFREWIRKFSWSSYN). Residues 46–66 (LIILGLAGCRFVLQWLIILDL) traverse the membrane as a helical segment. The Extracellular segment spans residues 67-82 (SLFPLFQSSRWLRYLS). The helical transmembrane segment at 83-103 (IFWVLVSQASLWFATFLSVFY) threads the bilayer. The Cytoplasmic segment spans residues 104–127 (CKKITTFDHPAYLWLKQRAYNLSL). The helical transmembrane segment at 128-148 (WCLLGYFIINLLLTVQIGLMF) threads the bilayer. Residues 149–175 (YHPPQGNSSIRYPFESWQYLYAFRLNS) are Extracellular-facing. Asparagine 155 carries N-linked (GlcNAc...) asparagine glycosylation. The chain crosses the membrane as a helical span at residues 176-196 (GSYLPLMVFLVSSGMLIVSLY). Residues 197 to 223 (THHKKMKVHSAGRRDVRAKAHITALKS) lie on the Cytoplasmic side of the membrane. A helical transmembrane segment spans residues 224–244 (LGCFLLLHLVYIMASPFSIAS). The Extracellular portion of the chain corresponds to 245–253 (KTYPPDLTS). Residues 254 to 274 (VFIWETLMAAYPSLHSLILIM) traverse the membrane as a helical segment. At 275-299 (GIPRVKQTCQKIXWKTVCARRCWGP) the chain is on the cytoplasmic side.

Belongs to the G-protein coupled receptor T2R family.

The protein resides in the membrane. In terms of biological role, receptor that may play a role in the perception of bitterness and is gustducin-linked. May play a role in sensing the chemical composition of the gastrointestinal content. The activity of this receptor may stimulate alpha gustducin, mediate PLC-beta-2 activation and lead to the gating of TRPM5. This is Taste receptor type 2 member 5 (TAS2R5) from Pan troglodytes (Chimpanzee).